The sequence spans 171 residues: 6,7-dimethyl-8-ribityllumazine synthase (171 aa).

5-amino-6-(D-ribitylamino)uracil is bound by residues phenylalanine 24, 58–60 (ALE), and 82–84 (AVI). 87–88 (ET) is a (2S)-2-hydroxy-3-oxobutyl phosphate binding site. Histidine 90 serves as the catalytic Proton donor. A 5-amino-6-(D-ribitylamino)uracil-binding site is contributed by asparagine 115. Arginine 129 contacts (2S)-2-hydroxy-3-oxobutyl phosphate. Residues 150–171 (ALDQLGDDEDEEEDEDDEEERA) are disordered. A compositionally biased stretch (acidic residues) spans 154-171 (LGDDEDEEEDEDDEEERA).

This sequence belongs to the DMRL synthase family.

It catalyses the reaction (2S)-2-hydroxy-3-oxobutyl phosphate + 5-amino-6-(D-ribitylamino)uracil = 6,7-dimethyl-8-(1-D-ribityl)lumazine + phosphate + 2 H2O + H(+). The protein operates within cofactor biosynthesis; riboflavin biosynthesis; riboflavin from 2-hydroxy-3-oxobutyl phosphate and 5-amino-6-(D-ribitylamino)uracil: step 1/2. Functionally, catalyzes the formation of 6,7-dimethyl-8-ribityllumazine by condensation of 5-amino-6-(D-ribitylamino)uracil with 3,4-dihydroxy-2-butanone 4-phosphate. This is the penultimate step in the biosynthesis of riboflavin. The chain is 6,7-dimethyl-8-ribityllumazine synthase from Burkholderia cenocepacia (strain HI2424).